We begin with the raw amino-acid sequence, 278 residues long: Phosphatidylglycerol--prolipoprotein diacylglyceryl transferase (278 aa).

Helical transmembrane passes span 19–39 (WYGILMATGVLVATLMAINEG), 49–69 (FIDFLLWAVPIGFIGARIYYV), 83–103 (IIAIWNGGIAIYGGLIAGLIV), and 112–132 (MLPPFLMLDIIAPGVMAAQVI). R134 lines the a 1,2-diacyl-sn-glycero-3-phospho-(1'-sn-glycerol) pocket. The next 3 membrane-spanning stretches (helical) occupy residues 174–194 (QPTYLYESALNLVGLILILSL), 204–224 (GEVFFSYVIWYAAVRFFVEGM), and 235–255 (IRVSQALSLILFFGAIILWVY).

It belongs to the Lgt family.

It localises to the cell membrane. It carries out the reaction L-cysteinyl-[prolipoprotein] + a 1,2-diacyl-sn-glycero-3-phospho-(1'-sn-glycerol) = an S-1,2-diacyl-sn-glyceryl-L-cysteinyl-[prolipoprotein] + sn-glycerol 1-phosphate + H(+). It functions in the pathway protein modification; lipoprotein biosynthesis (diacylglyceryl transfer). Functionally, catalyzes the transfer of the diacylglyceryl group from phosphatidylglycerol to the sulfhydryl group of the N-terminal cysteine of a prolipoprotein, the first step in the formation of mature lipoproteins. The chain is Phosphatidylglycerol--prolipoprotein diacylglyceryl transferase from Lactobacillus gasseri (strain ATCC 33323 / DSM 20243 / BCRC 14619 / CIP 102991 / JCM 1131 / KCTC 3163 / NCIMB 11718 / NCTC 13722 / AM63).